We begin with the raw amino-acid sequence, 85 residues long: Large ribosomal subunit protein bL27 (85 aa).

Belongs to the bacterial ribosomal protein bL27 family.

The protein is Large ribosomal subunit protein bL27 of Xylella fastidiosa (strain Temecula1 / ATCC 700964).